The primary structure comprises 303 residues: Ornithine carbamoyltransferase (303 aa).

Residues 53 to 56 (STRT), Gln80, Arg104, and 131 to 134 (HPCQ) each bind carbamoyl phosphate. L-ornithine is bound by residues Asn162, Asp222, and 226–227 (SM). Residues 261-262 (CL) and Arg289 each bind carbamoyl phosphate.

Belongs to the aspartate/ornithine carbamoyltransferase superfamily. OTCase family.

It is found in the cytoplasm. It catalyses the reaction carbamoyl phosphate + L-ornithine = L-citrulline + phosphate + H(+). It functions in the pathway amino-acid biosynthesis; L-arginine biosynthesis; L-arginine from L-ornithine and carbamoyl phosphate: step 1/3. Reversibly catalyzes the transfer of the carbamoyl group from carbamoyl phosphate (CP) to the N(epsilon) atom of ornithine (ORN) to produce L-citrulline. The protein is Ornithine carbamoyltransferase of Mesorhizobium japonicum (strain LMG 29417 / CECT 9101 / MAFF 303099) (Mesorhizobium loti (strain MAFF 303099)).